A 682-amino-acid polypeptide reads, in one-letter code: Zinc finger protein 16 (682 aa).

Composition is skewed to basic and acidic residues over residues 1–10 and 113–125; these read MPSLRTRREE and VSER…EGRR. 2 disordered regions span residues 1–33 and 112–134; these read MPSL…HVSD and DVSE…SQEG. The necessary for transcription activation stretch occupies residues 62–210; sequence YQQPDCDTRT…GVPTAESPLI (149 aa). The C2H2-type 1; degenerate zinc finger occupies 209–231; that stretch reads LICNECGKTFQGNPDLIQCQIVH. A C2H2-type 2; degenerate zinc finger spans residues 237-259; that stretch reads FMCDDCGKTFSQNSVLKNHHRSH. Lysine 253 is covalently cross-linked (Glycyl lysine isopeptide (Lys-Gly) (interchain with G-Cter in SUMO2)). C2H2-type zinc fingers lie at residues 265-287, 293-315, 321-343, 349-371, 377-399, 405-427, 433-455, and 461-483; these read YQCS…QSHH, YMCN…QKSH, YECN…QRIH, YVCS…HRTH, FECG…QRVH, YECN…HRVH, YKCS…RRIH, and HVCN…QIIH. Required for nuclear localization regions lie at residues 268-393 and 341-373; these read SECG…AHLR and RIHS…THTG. Residues 473-503 are required for nuclear localization; sequence SSVLRKHQIIHTGEKPYRCSVCGKAFSHSSA. N6-acetyllysine is present on lysine 487. 7 C2H2-type zinc fingers span residues 489 to 511, 517 to 539, 545 to 567, 573 to 595, 601 to 623, 629 to 651, and 657 to 679; these read YRCS…QGVH, YACH…QRVH, YECT…QRIH, HECN…QKVH, YTCV…QIIH, YKCS…QRIH, and YDCA…QLIH.

This sequence belongs to the krueppel C2H2-type zinc-finger protein family. In terms of assembly, interacts with INCA1; the interaction inhibits INCA1 activity and induces the cell cycle process.

It is found in the nucleus. Its function is as follows. Acts as a transcriptional activator. Promotes cell proliferation by facilitating the cell cycle phase transition from the S to G2/M phase. Involved in both the hemin- and phorbol myristate acetate (PMA)-induced erythroid and megakaryocytic differentiation, respectively. Also plays a role as an inhibitor of cell apoptosis. The chain is Zinc finger protein 16 (ZNF16) from Gorilla gorilla gorilla (Western lowland gorilla).